A 266-amino-acid polypeptide reads, in one-letter code: Pyridoxal phosphate phosphatase YigL (266 aa).

Asp8 acts as the Nucleophile in catalysis. Residue Asp8 participates in Mg(2+) binding. Residue Leu9 participates in phosphate binding. Residue Asp10 coordinates Mg(2+). Residues 42–43 (TG) and Lys191 each bind phosphate. Asp214 contributes to the Mg(2+) binding site. Residue Asn217 participates in phosphate binding.

Belongs to the HAD-like hydrolase superfamily. Cof family. The cofactor is Mg(2+). Requires Mn(2+) as cofactor. It depends on Co(2+) as a cofactor. Zn(2+) is required as a cofactor.

The enzyme catalyses pyridoxal 5'-phosphate + H2O = pyridoxal + phosphate. It carries out the reaction sugar phosphate + H2O = sugar + phosphate.. Its function is as follows. Catalyzes Strongly the dephosphorylation of pyridoxal-phosphate (PLP) and moderately the dephosphorylation of 2-deoxyglucose 6-phosphate (2bGLU6P) and beta-glucose 6-phosphate (bGlu6P). Also hydrolyzes both purines (GMP and IMP) and pyrimidines as secondary substrates. The sequence is that of Pyridoxal phosphate phosphatase YigL (yigL) from Escherichia coli (strain K12).